The following is a 147-amino-acid chain: Small ribosomal subunit protein uS12 (147 aa).

It belongs to the universal ribosomal protein uS12 family. Part of the 30S ribosomal subunit.

In terms of biological role, with S4 and S5 plays an important role in translational accuracy. Located at the interface of the 30S and 50S subunits. The polypeptide is Small ribosomal subunit protein uS12 (Methanococcus aeolicus (strain ATCC BAA-1280 / DSM 17508 / OCM 812 / Nankai-3)).